We begin with the raw amino-acid sequence, 398 residues long: Cell adhesion molecule 3 (398 aa).

The signal sequence occupies residues Met-1–Ala-24. The Ig-like V-type domain occupies Asn-25–Val-126. Residues Asn-25–His-330 are Extracellular-facing. Intrachain disulfides connect Cys-50–Cys-110, Cys-152–Cys-209, and Cys-254–Cys-299. Ig-like C2-type domains follow at residues Pro-130–Glu-228 and Pro-233–Asn-315. Asn-290 is a glycosylation site (N-linked (GlcNAc...) asparagine). Residues Ala-331–Leu-351 form a helical membrane-spanning segment. Residues Gly-352–Ile-398 lie on the Cytoplasmic side of the membrane. A disordered region spans residues Ala-367 to Ile-398. Ser-388 is modified (phosphoserine).

It belongs to the nectin family. As to quaternary structure, homodimer. Can form trans-heterodimers with NECTIN3. Interacts with EPB41L1, DLG3, PALS2 and CASK. As to expression, isoform 1 is expressed mainly in adult and fetal brain. Isoform 2 is highly expressed in adult brain and weakly expressed in placenta. In brain, Isoform 2 is highly expressed in cerebellum.

The protein localises to the cell membrane. It localises to the cell junction. In terms of biological role, involved in cell-cell adhesion. Has both calcium-independent homophilic cell-cell adhesion activity and calcium-independent heterophilic cell-cell adhesion activity with IGSF4, NECTIN1 and NECTIN3. Interaction with EPB41L1 may regulate structure or function of cell-cell junctions. This is Cell adhesion molecule 3 (CADM3) from Homo sapiens (Human).